The following is a 484-amino-acid chain: Solute carrier family 40 member 1 (484 aa).

The next 11 helical transmembrane spans lie at 58-78 (LLTAVYGVVEASAVAALGPIV), 94-114 (WLLLQGASFVAAGVSVTALLV), 123-143 (GFPAFVALVVVTNVSGALAAL), 189-209 (VLSGFFISFVSMEASAAALAA), 212-232 (LAAVWVQYWLFVSVYAGFPAL), 279-299 (VVLPGVALAFLYFTVLSFGTL), 308-328 (GIPAYVISLARGVSAAVGIAA), 346-366 (LWSIWAQWCCLLVCVASVWAG), 377-397 (LMGGVAASRLGLWMFDLAVMQ), 413-433 (GVQNSLQSMFDLLTYVMGIIV), and 442-462 (LIVLSFFLVTCAAAMYTMHVY).

The protein belongs to the ferroportin (FP) (TC 2.A.100) family. SLC40A subfamily.

It is found in the membrane. May be involved in iron transport and iron homeostasis. The protein is Solute carrier family 40 member 1 of Oryza sativa subsp. japonica (Rice).